The chain runs to 484 residues: uncharacterized protein (484 aa).

This is an uncharacterized protein from Orgyia pseudotsugata multicapsid polyhedrosis virus (OpMNPV).